We begin with the raw amino-acid sequence, 308 residues long: SAP30-binding protein (308 aa).

The disordered stretch occupies residues 15–101 (AEYSDPESDG…EAEKRDPQEL (87 aa)). Phosphoserine is present on residues serine 18, serine 22, serine 43, and serine 52. The segment covering 57–78 (DEDGYEEEEDENSKQSEDDDSE) has biased composition (acidic residues). Over residues 79 to 99 (TEKPEADDPKDNTEAEKRDPQ) the composition is skewed to basic and acidic residues. Residue lysine 95 forms a Glycyl lysine isopeptide (Lys-Gly) (interchain with G-Cter in SUMO2) linkage. Serine 113 carries the post-translational modification Phosphoserine. Glycyl lysine isopeptide (Lys-Gly) (interchain with G-Cter in SUMO2) cross-links involve residues lysine 220, lysine 304, and lysine 305.

Belongs to the HCNGP family. In terms of assembly, interacts with histone deacetylase complex subunit SAP30.

It is found in the nucleus. In terms of biological role, plays a role in transcriptional repression by promoting histone deacetylase activity, leading to deacetylation of histone H3. May be involved in the regulation of beta-2-microglobulin genes. This chain is SAP30-binding protein (Sap30bp), found in Mus musculus (Mouse).